A 1165-amino-acid chain; its full sequence is Symplekin (1165 aa).

5 HEAT repeats span residues 23–58 (TATA…TVLG), 61–95 (AELA…QVCK), 98–140 (VELL…YLCS), 147–186 (SAEQ…GVVV), and 218–257 (KLQE…IAKM). The tract at residues 365–384 (DQQQREMELDTEELERQKQK) is disordered. Residues 367-384 (QQREMELDTEELERQKQK) show a composition bias toward basic and acidic residues.

Belongs to the Symplekin family. As to quaternary structure, interacts with Cpsf73 and Cpsf100 forming a core cleavage factor required for both polyadenylated and histone mRNA processing. Interacts with Slbp and Lsm11.

It is found in the nucleus. In terms of biological role, component of a protein complex required for cotranscriptional processing of 3'-ends of polyadenylated and histone pre-mRNA. Involved in germline stem cell transit amplification, differentiation and mitosis-to-meiosis transition. The polypeptide is Symplekin (Drosophila melanogaster (Fruit fly)).